The chain runs to 254 residues: 4-hydroxy-tetrahydrodipicolinate reductase (254 aa).

7-12 (GASGRI) provides a ligand contact to NAD(+). R35 contributes to the NADP(+) binding site. Residues 91 to 93 (GTT) and 115 to 118 (AHNM) each bind NAD(+). H147 acts as the Proton donor/acceptor in catalysis. Residue H148 participates in (S)-2,3,4,5-tetrahydrodipicolinate binding. Catalysis depends on K151, which acts as the Proton donor. 157–158 (GT) is a binding site for (S)-2,3,4,5-tetrahydrodipicolinate.

This sequence belongs to the DapB family.

Its subcellular location is the cytoplasm. It catalyses the reaction (S)-2,3,4,5-tetrahydrodipicolinate + NAD(+) + H2O = (2S,4S)-4-hydroxy-2,3,4,5-tetrahydrodipicolinate + NADH + H(+). It carries out the reaction (S)-2,3,4,5-tetrahydrodipicolinate + NADP(+) + H2O = (2S,4S)-4-hydroxy-2,3,4,5-tetrahydrodipicolinate + NADPH + H(+). The protein operates within amino-acid biosynthesis; L-lysine biosynthesis via DAP pathway; (S)-tetrahydrodipicolinate from L-aspartate: step 4/4. In terms of biological role, catalyzes the conversion of 4-hydroxy-tetrahydrodipicolinate (HTPA) to tetrahydrodipicolinate. This is 4-hydroxy-tetrahydrodipicolinate reductase from Helicobacter pylori (strain Shi470).